A 506-amino-acid polypeptide reads, in one-letter code: Histidine ammonia-lyase (506 aa).

The segment at residues 144–146 (ASG) is a cross-link (5-imidazolinone (Ala-Gly)). 2,3-didehydroalanine (Ser) is present on Ser-145.

This sequence belongs to the PAL/histidase family. Contains an active site 4-methylidene-imidazol-5-one (MIO), which is formed autocatalytically by cyclization and dehydration of residues Ala-Ser-Gly.

It is found in the cytoplasm. It carries out the reaction L-histidine = trans-urocanate + NH4(+). Its pathway is amino-acid degradation; L-histidine degradation into L-glutamate; N-formimidoyl-L-glutamate from L-histidine: step 1/3. This is Histidine ammonia-lyase from Legionella pneumophila (strain Paris).